The following is a 372-amino-acid chain: 12-oxophytodienoate reductase 1 (372 aa).

The residue at position 1 (Met-1) is an N-acetylmethionine. Residues 31-33, Ala-64, and Gln-106 each bind FMN; that span reads PLT. Residue His-183 participates in substrate binding. Tyr-188 acts as the Proton donor in catalysis. Residue Arg-235 coordinates FMN. A substrate-binding site is contributed by Arg-275. FMN contacts are provided by residues 303 to 305 and 326 to 327; these read AGG and GR.

This sequence belongs to the NADH:flavin oxidoreductase/NADH oxidase family. FMN is required as a cofactor. As to expression, mostly expressed in roots, also present in leaves, shoots and flowers. More abundant in cotyledons. In more details, expressed in peduncles, sepals, petals, around the abscission zone of siliques, maturing siliques and developing seeds.

It is found in the cytoplasm. It carries out the reaction (1S,2S)-OPC-8 + NADP(+) = (9S,13S,15Z)-12-oxophyto-10,15-dienoate + NADPH + H(+). It functions in the pathway lipid metabolism; oxylipin biosynthesis. In terms of biological role, specifically cleaves olefinic bonds in alpha,beta-unsaturated carbonyls and may be involved in detoxification or modification of these reactive compounds. May be involved in the biosynthesis or metabolism of oxylipin signaling molecules. In vitro, reduces 9R,13R-12-oxophytodienoic acid (9R,13R-OPDA) to 9R,13R-OPC-8:0, but only poorly 9S,13S-OPDA, the natural precursor of jasmonic acid. Can detoxify the explosive 2,4,6-trinitrotoluene (TNT) in vitro and in vivo by catalyzing its nitroreduction to form hydroxylamino-dinitrotoluene (HADNT). The sequence is that of 12-oxophytodienoate reductase 1 from Arabidopsis thaliana (Mouse-ear cress).